A 162-amino-acid polypeptide reads, in one-letter code: Large ribosomal subunit protein bL17 (162 aa).

The interval 126–162 (KKEEVKTKSRRGGKAKKAEPTTEAPANTTEETTDSAE) is disordered. Over residues 146–155 (TTEAPANTTE) the composition is skewed to low complexity.

Belongs to the bacterial ribosomal protein bL17 family. In terms of assembly, part of the 50S ribosomal subunit. Contacts protein L32.

The polypeptide is Large ribosomal subunit protein bL17 (Flavobacterium psychrophilum (strain ATCC 49511 / DSM 21280 / CIP 103535 / JIP02/86)).